Reading from the N-terminus, the 208-residue chain is Small ribosomal subunit protein uS4 (208 aa).

The tract at residues 32–53 (LNRKRGKNSPGQHGASKVKMSD) is disordered. An S4 RNA-binding domain is found at 99–161 (LRLDNVVYRL…YKSNVIIKKL (63 aa)).

This sequence belongs to the universal ribosomal protein uS4 family. As to quaternary structure, part of the 30S ribosomal subunit. Contacts protein S5. The interaction surface between S4 and S5 is involved in control of translational fidelity.

Its function is as follows. One of the primary rRNA binding proteins, it binds directly to 16S rRNA where it nucleates assembly of the body of the 30S subunit. With S5 and S12 plays an important role in translational accuracy. The chain is Small ribosomal subunit protein uS4 from Endomicrobium trichonymphae.